Here is a 394-residue protein sequence, read N- to C-terminus: Elongation factor Tu (394 aa).

The region spanning 10 to 204 is the tr-type G domain; that stretch reads KPHVNVGTIG…ALDSYIPEPQ (195 aa). The tract at residues 19–26 is G1; the sequence is GHVDHGKT. Residue 19–26 coordinates GTP; the sequence is GHVDHGKT. T26 is a binding site for Mg(2+). The segment at 60–64 is G2; the sequence is GITIN. The G3 stretch occupies residues 81–84; that stretch reads DCPG. GTP-binding positions include 81 to 85 and 136 to 139; these read DCPGH and NKCD. Positions 136–139 are G4; sequence NKCD. Residues 174–176 are G5; sequence SAL.

This sequence belongs to the TRAFAC class translation factor GTPase superfamily. Classic translation factor GTPase family. EF-Tu/EF-1A subfamily. As to quaternary structure, monomer.

It localises to the cytoplasm. It carries out the reaction GTP + H2O = GDP + phosphate + H(+). In terms of biological role, GTP hydrolase that promotes the GTP-dependent binding of aminoacyl-tRNA to the A-site of ribosomes during protein biosynthesis. The chain is Elongation factor Tu from Shewanella putrefaciens (Pseudomonas putrefaciens).